The following is a 248-amino-acid chain: MRFDIVTLFPELFAPFLTSGITRRAFESGLVDVQLANPRDFAAGNYRRVDDRPFGGGPGMVMMAEPLAQCLKSIQSQRTEIAPVLLFSPAGQTLNHAMVQRWSDSQGAILICGRYEGLDQRFIDAYVTEQISLGDFVLSGGEIAAMALLDAVARLQPGVLNAADSHQQDSFNPVLDGLLDCPHYTRPENWLGRPVPEVLLSGHHVQIERWRREQRLALTLRLRPELIDQARRDGRLSRADEAFLASQV.

S-adenosyl-L-methionine is bound by residues glycine 113 and 133–138 (LGDFVL).

It belongs to the RNA methyltransferase TrmD family. As to quaternary structure, homodimer.

It is found in the cytoplasm. It catalyses the reaction guanosine(37) in tRNA + S-adenosyl-L-methionine = N(1)-methylguanosine(37) in tRNA + S-adenosyl-L-homocysteine + H(+). In terms of biological role, specifically methylates guanosine-37 in various tRNAs. This chain is tRNA (guanine-N(1)-)-methyltransferase, found in Albidiferax ferrireducens (strain ATCC BAA-621 / DSM 15236 / T118) (Rhodoferax ferrireducens).